Consider the following 262-residue polypeptide: ELL-associated factor 2 (262 aa).

Positions 17–104 (LKLGESFEKQ…TGECRLEKLS (88 aa)) are necessary for interaction with ELL. Residues serine 146, serine 151, and serine 154 each carry the phosphoserine modification. Residues 170–237 (MDQMSSCDSS…EADATCHRLQ (68 aa)) are disordered. Residues 174 to 192 (SSCDSSSDSKSSSSSSSED) are compositionally biased toward low complexity. The necessary for transactivation activity stretch occupies residues 177-262 (DSSSDSKSSS…LSESESDSED (86 aa)). Positions 193 to 202 (SSSDSEDDDQ) are enriched in acidic residues. Positions 227–237 (SEADATCHRLQ) are enriched in basic and acidic residues. The necessary for interaction with TCEA1 and transactivation activity stretch occupies residues 248–262 (RSDLQLSESESDSED).

It belongs to the EAF family. As to quaternary structure, component of the super elongation complex (SEC), at least composed of EAF1, EAF2, CDK9, MLLT3/AF9, AFF (AFF1 or AFF4), the P-TEFb complex and ELL (ELL, ELL2 or ELL3). Interacts with ELL and ELL2. Isoform 1 and isoform 2 interact with TCEA1. As to expression, isoform 1 is expressed in ovary, uterus, mammary glands, brain, spleen, liver, lung, thymus, kidney, skeletal muscle, skin and testis. Isoform 2 is expressed in kidney.

The protein localises to the nucleus speckle. Acts as a transcriptional transactivator of ELL and ELL2 elongation activities. Acts as a transcriptional transactivator of TCEA1 elongation activity. The protein is ELL-associated factor 2 (Eaf2) of Mus musculus (Mouse).